A 167-amino-acid chain; its full sequence is Phosphopantetheine adenylyltransferase (167 aa).

Residue S10 coordinates substrate. ATP is bound by residues 10–11 and H18; that span reads SF. The substrate site is built by K42, A79, and R93. ATP-binding positions include 94-96, E104, and 129-135; these read GLR and VGHITAT.

This sequence belongs to the bacterial CoaD family. Homohexamer. The cofactor is Mg(2+).

It localises to the cytoplasm. It catalyses the reaction (R)-4'-phosphopantetheine + ATP + H(+) = 3'-dephospho-CoA + diphosphate. Its pathway is cofactor biosynthesis; coenzyme A biosynthesis; CoA from (R)-pantothenate: step 4/5. Functionally, reversibly transfers an adenylyl group from ATP to 4'-phosphopantetheine, yielding dephospho-CoA (dPCoA) and pyrophosphate. This Methylocella silvestris (strain DSM 15510 / CIP 108128 / LMG 27833 / NCIMB 13906 / BL2) protein is Phosphopantetheine adenylyltransferase.